Consider the following 388-residue polypeptide: P2X purinoceptor 4 (388 aa).

Over 1–33 (MAGCCAALAAFLFEYDTPRIVLIRSRKVGLMNR) the chain is Cytoplasmic. The chain crosses the membrane as a helical span at residues 34–54 (AVQLLILAYVIGWVFVWEKGY). The Extracellular segment spans residues 55-338 (QETDSVVSSV…KFDIIPTMIN (284 aa)). ATP-binding residues include Lys67 and Lys69. CTP is bound by residues Lys67 and Lys69. Residues Asn75 and Asn110 are each glycosylated (N-linked (GlcNAc...) asparagine). Intrachain disulfides connect Cys116–Cys165, Cys126–Cys149, and Cys132–Cys159. N-linked (GlcNAc...) asparagine glycosylation is found at Asn153 and Asn184. ATP is bound by residues Thr186 and Leu188. CTP is bound at residue Thr186. Asn199 and Asn208 each carry an N-linked (GlcNAc...) asparagine glycan. Intrachain disulfides connect Cys217/Cys227 and Cys261/Cys270. ATP is bound by residues Asn293, Arg295, and Lys313. Positions 293, 295, and 313 each coordinate CTP. A helical transmembrane segment spans residues 339–359 (IGSGLALLGMATVLCDIIVLY). The Cytoplasmic portion of the chain corresponds to 360 to 388 (CMKKRLYYREKKYKYVEDYEQGLASELDQ).

It belongs to the P2X receptor family. In terms of assembly, functional P2RXs are organized as homomeric and heteromeric trimers. Forms heterotrimer with P2RX1. Interacts with P2RX7 (via C-terminus); this interaction is functional only in the presence of ATP. Forms heterotrimer with P2RX4; functional differences between homomeric P2RX4 and P2RX4/6 heterotrimer are minor. Interacts with AP1M2.

The protein localises to the cell membrane. It localises to the lysosome membrane. It catalyses the reaction K(+)(in) = K(+)(out). It carries out the reaction Na(+)(in) = Na(+)(out). The catalysed reaction is Ca(2+)(in) = Ca(2+)(out). With respect to regulation, activated by ATP. pH-dependent and inhibited by acidic pH. Its function is as follows. ATP-gated nonselective transmembrane cation channel permeable to potassium, sodium and calcium. CTP, but not GTP or UTP, functions as a weak affinity agonist for P2RX4. Activated by extracellularly released ATP, it plays multiple role in immunity and central nervous system physiology. Plays a key role in initial steps of T-cell activation and Ca(2+) microdomain formation. Also participates in basal T-cell activity without TCR/CD3 stimulation. Promotes the differentiation and activation of Th17 cells via expression of retinoic acid-related orphan receptor C/RORC. Upon activation, drives microglia motility via the PI3K/Akt pathway. Could also function as an ATP-gated cation channel of lysosomal membranes. The protein is P2X purinoceptor 4 (P2RX4) of Homo sapiens (Human).